Consider the following 150-residue polypeptide: Copper transporter 3 (150 aa).

2 helical membrane passes run 50 to 70 and 100 to 120; these read GGMY…LEFL and LAYL…LAAV.

It belongs to the copper transporter (Ctr) (TC 1.A.56) family. SLC31A subfamily.

It localises to the membrane. Functionally, involved in the transport of copper. The protein is Copper transporter 3 (COPT3) of Oryza sativa subsp. japonica (Rice).